The sequence spans 461 residues: UDP-N-acetylmuramate--L-alanine ligase (461 aa).

An ATP-binding site is contributed by 112-118 (GTHGKTT).

This sequence belongs to the MurCDEF family.

Its subcellular location is the cytoplasm. The enzyme catalyses UDP-N-acetyl-alpha-D-muramate + L-alanine + ATP = UDP-N-acetyl-alpha-D-muramoyl-L-alanine + ADP + phosphate + H(+). Its pathway is cell wall biogenesis; peptidoglycan biosynthesis. Cell wall formation. This chain is UDP-N-acetylmuramate--L-alanine ligase, found in Hydrogenovibrio crunogenus (strain DSM 25203 / XCL-2) (Thiomicrospira crunogena).